A 360-amino-acid chain; its full sequence is Phosphoserine aminotransferase (360 aa).

Arginine 42 contacts L-glutamate. Residues 76–77, tryptophan 102, threonine 152, aspartate 171, and glutamine 194 each bind pyridoxal 5'-phosphate; that span reads AS. Lysine 195 carries the N6-(pyridoxal phosphate)lysine modification. 236 to 237 provides a ligand contact to pyridoxal 5'-phosphate; the sequence is NT.

This sequence belongs to the class-V pyridoxal-phosphate-dependent aminotransferase family. SerC subfamily. In terms of assembly, homodimer. It depends on pyridoxal 5'-phosphate as a cofactor.

The protein localises to the cytoplasm. It catalyses the reaction O-phospho-L-serine + 2-oxoglutarate = 3-phosphooxypyruvate + L-glutamate. The enzyme catalyses 4-(phosphooxy)-L-threonine + 2-oxoglutarate = (R)-3-hydroxy-2-oxo-4-phosphooxybutanoate + L-glutamate. It functions in the pathway amino-acid biosynthesis; L-serine biosynthesis; L-serine from 3-phospho-D-glycerate: step 2/3. Functionally, catalyzes the reversible conversion of 3-phosphohydroxypyruvate to phosphoserine and of 3-hydroxy-2-oxo-4-phosphonooxybutanoate to phosphohydroxythreonine. The polypeptide is Phosphoserine aminotransferase (Geobacillus kaustophilus (strain HTA426)).